The sequence spans 222 residues: Beta-casein (222 aa).

An N-terminal signal peptide occupies residues 1–15 (MKVLILACLVALALA). At threonine 27 the chain carries Phosphothreonine. Residues serine 30, serine 32, serine 33, and serine 34 each carry the phosphoserine modification.

This sequence belongs to the beta-casein family. Mammary gland specific. Secreted in milk.

The protein localises to the secreted. In terms of biological role, important role in determination of the surface properties of the casein micelles. The protein is Beta-casein (CSN2) of Ovis aries (Sheep).